A 161-amino-acid chain; its full sequence is Protein-export protein SecB (161 aa).

This sequence belongs to the SecB family. Homotetramer, a dimer of dimers. One homotetramer interacts with 1 SecA dimer.

Its subcellular location is the cytoplasm. Its function is as follows. One of the proteins required for the normal export of preproteins out of the cell cytoplasm. It is a molecular chaperone that binds to a subset of precursor proteins, maintaining them in a translocation-competent state. It also specifically binds to its receptor SecA. The chain is Protein-export protein SecB from Shewanella baltica (strain OS155 / ATCC BAA-1091).